The chain runs to 906 residues: Cadherin-2 (906 aa).

The signal sequence occupies residues 1-25 (MCRIAGGPRTLLPLLAALLQASLEA). Positions 26–159 (SGELALCKTG…HSGALQRQKR (134 aa)) are excised as a propeptide. S96 carries the post-translational modification Phosphoserine. 5 Cadherin domains span residues 160 to 267 (DWVI…RPEF), 268 to 382 (LHQV…PPEF), 383 to 497 (TAMT…NPYF), 498 to 603 (APNP…DNAP), and 604 to 717 (QVLP…RIVG). At 160–724 (DWVIPPINLP…IVGAGLGTGT (565 aa)) the chain is on the extracellular side. E170 lines the Ca(2+) pocket. The N-linked (GlcNAc...) asparagine glycan is linked to N190. Ca(2+) is bound by residues D226, E228, D259, M260, N261, D262, and N263. N-linked (GlcNAc...) asparagine glycosylation is present at N273. Ca(2+) contacts are provided by D293, D295, and N301. N-linked (GlcNAc...) asparagine glycosylation occurs at N325. D353 is a Ca(2+) binding site. N-linked (GlcNAc...) asparagine glycosylation is found at N402, N572, N622, N651, and N692. Residues 725–745 (IIAILLCIIILLILVLMFVVW) traverse the membrane as a helical segment. Residues 746-906 (MKRRDKERQA…LADMYGGGDD (161 aa)) are Cytoplasmic-facing. Over residues 863–880 (SGSTAGSLSSLNSSSSGG) the composition is skewed to low complexity. Positions 863–883 (SGSTAGSLSSLNSSSSGGDQD) are disordered.

In terms of assembly, homodimer (via extracellular region). Can also form heterodimers with other cadherins (via extracellular region). Dimerization occurs in trans, i.e. with a cadherin chain from another cell. Interacts with PCDH8; this complex may also include TAOK2. The interaction with PCDH8 may lead to internalization through TAOK2/p38 MAPK pathway. Identified in a complex containing FGFR4, NCAM1, CDH2, PLCG1, FRS2, SRC, SHC1, GAP43 and CTTN. May interact with OBSCN (via protein kinase domain 2). Interacts with FBXO45. In terms of processing, cleaved by MMP24. Ectodomain cleavage leads to the generation of a soluble 90 kDa N-terminal soluble fragment and a 45 kDa membrane-bound C-terminal fragment 1 (CTF1), which is further cleaved by gamma-secretase into a 35 kDa. Cleavage in neural stem cells by MMP24 affects CDH2-mediated anchorage of neural stem cells to ependymocytes in the adult subependymal zone, leading to modulate neural stem cell quiescence. May be phosphorylated by OBSCN. In testis, expressed in Sertoli and germ cells.

The protein localises to the cell membrane. It localises to the sarcolemma. The protein resides in the cell junction. It is found in the cell surface. Its subcellular location is the desmosome. The protein localises to the adherens junction. Functionally, calcium-dependent cell adhesion protein; preferentially mediates homotypic cell-cell adhesion by dimerization with a CDH2 chain from another cell. Cadherins may thus contribute to the sorting of heterogeneous cell types. Acts as a regulator of neural stem cells quiescence by mediating anchorage of neural stem cells to ependymocytes in the adult subependymal zone: upon cleavage by MMP24, CDH2-mediated anchorage is affected, leading to modulate neural stem cell quiescence. Plays a role in cell-to-cell junction formation between pancreatic beta cells and neural crest stem (NCS) cells, promoting the formation of processes by NCS cells. Required for proper neurite branching. Required for pre- and postsynaptic organization. CDH2 may be involved in neuronal recognition mechanism. In hippocampal neurons, may regulate dendritic spine density. The sequence is that of Cadherin-2 (Cdh2) from Rattus norvegicus (Rat).